The chain runs to 174 residues: Protein C2-DOMAIN ABA-RELATED 2 (174 aa).

Met1 bears the N-acetylmethionine mark. The C2 domain occupies 1 to 104 (MENMLGLLRL…EAIRIQNQLG (104 aa)). Positions 21, 22, 27, 73, 74, 75, and 81 each coordinate Ca(2+).

The protein belongs to the plant CAR protein family. In terms of assembly, binds to PYR/PYL/RCAR abscisic acid intracellular receptors in an ABA-independent manner, both at the plasma membrane and in the nucleus. Ca(2+) is required as a cofactor.

The protein resides in the cell membrane. Its subcellular location is the nucleus. Its function is as follows. Stimulates the GTPase/ATPase activities of Obg-like ATPases. Mediates the transient calcium-dependent interaction of PYR/PYL/RCAR abscisic acid (ABA) receptors with the plasma membrane and thus regulates ABA sensitivity. The polypeptide is Protein C2-DOMAIN ABA-RELATED 2 (Arabidopsis thaliana (Mouse-ear cress)).